Consider the following 201-residue polypeptide: Small ribosomal subunit protein uS4c (201 aa).

Residues glycine 20–tyrosine 44 form a disordered region. One can recognise an S4 RNA-binding domain in the interval methionine 89–leucine 152.

Belongs to the universal ribosomal protein uS4 family. Part of the 30S ribosomal subunit. Contacts protein S5. The interaction surface between S4 and S5 is involved in control of translational fidelity.

It is found in the plastid. The protein resides in the chloroplast. Its function is as follows. One of the primary rRNA binding proteins, it binds directly to 16S rRNA where it nucleates assembly of the body of the 30S subunit. In terms of biological role, with S5 and S12 plays an important role in translational accuracy. This Barbarea verna (Land cress) protein is Small ribosomal subunit protein uS4c (rps4).